We begin with the raw amino-acid sequence, 119 residues long: NAD(P)H-quinone oxidoreductase subunit M (119 aa).

The protein belongs to the complex I NdhM subunit family. In terms of assembly, NDH-1 can be composed of about 15 different subunits; different subcomplexes with different compositions have been identified which probably have different functions.

The protein localises to the cellular thylakoid membrane. It catalyses the reaction a plastoquinone + NADH + (n+1) H(+)(in) = a plastoquinol + NAD(+) + n H(+)(out). It carries out the reaction a plastoquinone + NADPH + (n+1) H(+)(in) = a plastoquinol + NADP(+) + n H(+)(out). NDH-1 shuttles electrons from an unknown electron donor, via FMN and iron-sulfur (Fe-S) centers, to quinones in the respiratory and/or the photosynthetic chain. The immediate electron acceptor for the enzyme in this species is believed to be plastoquinone. Couples the redox reaction to proton translocation, and thus conserves the redox energy in a proton gradient. Cyanobacterial NDH-1 also plays a role in inorganic carbon-concentration. The polypeptide is NAD(P)H-quinone oxidoreductase subunit M (Gloeothece citriformis (strain PCC 7424) (Cyanothece sp. (strain PCC 7424))).